Consider the following 115-residue polypeptide: U3-lycotoxin-Ls1i (115 aa).

The first 20 residues, 1-20 (MKFVLLFGVFLVTLFSYSSA), serve as a signal peptide directing secretion. Residues 21-44 (EMLDDFDQADEDELLSLIEKEEAR) constitute a propeptide that is removed on maturation. Intrachain disulfides connect C48-C63, C55-C72, C62-C87, and C74-C85.

The protein belongs to the neurotoxin 19 (CSTX) family. 01 subfamily. As to expression, expressed by the venom gland.

It is found in the secreted. The chain is U3-lycotoxin-Ls1i from Lycosa singoriensis (Wolf spider).